Here is a 130-residue protein sequence, read N- to C-terminus: Protein ApaG (130 aa).

An ApaG domain is found at 3 to 127; the sequence is RAVTRGIEVS…FSLDIPEQRR (125 aa).

This Brucella anthropi (strain ATCC 49188 / DSM 6882 / CCUG 24695 / JCM 21032 / LMG 3331 / NBRC 15819 / NCTC 12168 / Alc 37) (Ochrobactrum anthropi) protein is Protein ApaG.